The following is a 240-amino-acid chain: UDP-2,3-diacylglucosamine hydrolase (240 aa).

5 residues coordinate Mn(2+): Asp8, His10, Asp41, Asn79, and His114. Substrate is bound at residue 79–80 (NR). Substrate-binding residues include Asp122, Ser160, Asn164, Lys167, and His195. The Mn(2+) site is built by His195 and His197.

It belongs to the LpxH family. Mn(2+) is required as a cofactor.

It is found in the cell inner membrane. It carries out the reaction UDP-2-N,3-O-bis[(3R)-3-hydroxytetradecanoyl]-alpha-D-glucosamine + H2O = 2-N,3-O-bis[(3R)-3-hydroxytetradecanoyl]-alpha-D-glucosaminyl 1-phosphate + UMP + 2 H(+). It functions in the pathway glycolipid biosynthesis; lipid IV(A) biosynthesis; lipid IV(A) from (3R)-3-hydroxytetradecanoyl-[acyl-carrier-protein] and UDP-N-acetyl-alpha-D-glucosamine: step 4/6. Functionally, hydrolyzes the pyrophosphate bond of UDP-2,3-diacylglucosamine to yield 2,3-diacylglucosamine 1-phosphate (lipid X) and UMP by catalyzing the attack of water at the alpha-P atom. Involved in the biosynthesis of lipid A, a phosphorylated glycolipid that anchors the lipopolysaccharide to the outer membrane of the cell. The chain is UDP-2,3-diacylglucosamine hydrolase from Yersinia enterocolitica serotype O:8 / biotype 1B (strain NCTC 13174 / 8081).